The primary structure comprises 644 residues: 3D-(3,5/4)-trihydroxycyclohexane-1,2-dione hydrolase 2 (644 aa).

A thiamine diphosphate-binding site is contributed by Glu-65. Positions 442–522 (SLPGDLQRMW…INVLLFDNSG (81 aa)) are thiamine pyrophosphate binding. Mg(2+) contacts are provided by Asp-493 and Asn-520.

Belongs to the TPP enzyme family. Requires Mg(2+) as cofactor. Thiamine diphosphate is required as a cofactor.

It carries out the reaction 3D-3,5/4-trihydroxycyclohexane-1,2-dione + H2O = 5-deoxy-D-glucuronate + H(+). The protein operates within polyol metabolism; myo-inositol degradation into acetyl-CoA; acetyl-CoA from myo-inositol: step 3/7. Involved in the cleavage of the C1-C2 bond of 3D-(3,5/4)-trihydroxycyclohexane-1,2-dione (THcHDO) to yield 5-deoxy-glucuronate (5DG). The sequence is that of 3D-(3,5/4)-trihydroxycyclohexane-1,2-dione hydrolase 2 from Bacillus cereus (strain ZK / E33L).